A 419-amino-acid polypeptide reads, in one-letter code: Divinyl chlorophyllide a 8-vinyl-reductase, chloroplastic (419 aa).

The transit peptide at 1-71 directs the protein to the chloroplast; sequence MSICSTVGAG…PIVVSSTPVV (71 aa).

Its subcellular location is the plastid. The protein resides in the chloroplast. It carries out the reaction protochlorophyllide a + NADP(+) = 3,8-divinyl protochlorophyllide a + NADPH + H(+). Its pathway is porphyrin-containing compound metabolism; chlorophyll biosynthesis. Functionally, catalyzes the conversion of divinyl chlorophyllide to monovinyl chlorophyllide. Reduces the 8-vinyl group of the tetrapyrrole to an ethyl group using NADPH as the reductant. The best substrate is (3,8-divinyl)-chlorophyllide a (DV-Chlidea). Very low activity with (3,8-divinyl)-protochlorophyllide a (DV-Pchlidea) and (3,8-divinyl)-magnesium-protoporphyrin IX monomethyl ester (DV-MPE). No activity with (3,8-divinyl)-magnesium-protoporphyrin IX (DV-Mg-Proto) and (3,8-divinyl)-chlorophyll a (DV-Chla). The chain is Divinyl chlorophyllide a 8-vinyl-reductase, chloroplastic (DVR) from Cucumis sativus (Cucumber).